Consider the following 234-residue polypeptide: Riboflavin kinase (234 aa).

The H-T-H motif-like stretch occupies residues 1-98 (MAESTTAVGH…QEIFGDNSSV (98 aa)). The tract at residues 99–234 (VELTGTVTSG…RITVQLKPKE (136 aa)) is riboflavin kinase. A CDP-binding site is contributed by 108-113 (GMGEGR). The Mg(2+) site is built by T137 and N139. FMN contacts are provided by T199 and E207. 212 to 215 (ERLR) contributes to the CDP binding site.

This sequence belongs to the archaeal riboflavin kinase family. The cofactor is Mg(2+).

The enzyme catalyses riboflavin + CTP = CDP + FMN + H(+). It participates in cofactor biosynthesis; FMN biosynthesis; FMN from riboflavin (CTP route): step 1/1. Functionally, catalyzes the CTP-dependent phosphorylation of riboflavin (vitamin B2) to form flavin mononucleotide (FMN). The chain is Riboflavin kinase (ribK) from Haloquadratum walsbyi (strain DSM 16790 / HBSQ001).